The sequence spans 257 residues: Methylthioribulose-1-phosphate dehydratase (257 aa).

Cys-107 is a substrate binding site. Zn(2+) is bound by residues His-125 and His-127. The Proton donor/acceptor role is filled by Glu-148. His-210 serves as a coordination point for Zn(2+).

The protein belongs to the aldolase class II family. MtnB subfamily. The cofactor is Zn(2+).

Its subcellular location is the cytoplasm. The enzyme catalyses 5-(methylsulfanyl)-D-ribulose 1-phosphate = 5-methylsulfanyl-2,3-dioxopentyl phosphate + H2O. The protein operates within amino-acid biosynthesis; L-methionine biosynthesis via salvage pathway; L-methionine from S-methyl-5-thio-alpha-D-ribose 1-phosphate: step 2/6. Functionally, catalyzes the dehydration of methylthioribulose-1-phosphate (MTRu-1-P) into 2,3-diketo-5-methylthiopentyl-1-phosphate (DK-MTP-1-P). In Lachancea thermotolerans (strain ATCC 56472 / CBS 6340 / NRRL Y-8284) (Yeast), this protein is Methylthioribulose-1-phosphate dehydratase.